A 90-amino-acid polypeptide reads, in one-letter code: MANHKSTQKSIRQDQKRNLINKSRKSNVKTFLKRVTLAINAGDKKVASEALSAAHSKLAKAANKGIFKLNTVSRKVSRLSRKIKQLEDKI.

Polar residues predominate over residues 1-10 (MANHKSTQKS). The segment at 1-25 (MANHKSTQKSIRQDQKRNLINKSRK) is disordered.

It belongs to the bacterial ribosomal protein bS20 family.

Binds directly to 16S ribosomal RNA. This Orientia tsutsugamushi (strain Boryong) (Rickettsia tsutsugamushi) protein is Small ribosomal subunit protein bS20.